Reading from the N-terminus, the 1157-residue chain is Pesticidal crystal protein Cry9Ca (1157 aa).

It belongs to the delta endotoxin family.

In terms of biological role, promotes colloidosmotic lysis by binding to the midgut epithelial cells of Lepidoptera larvae. Has a fairly broad spectrum of activity against members of the Pyralidae, Plutellidae, Sphingidae and Noctuidae families. It was the first insecticidal crystal protein characterized with activity against cutworms. No activity is observed against some beetles, such as the Colorado potato beetle. This chain is Pesticidal crystal protein Cry9Ca (cry9Ca), found in Bacillus thuringiensis subsp. tolworthi.